The following is a 267-amino-acid chain: uncharacterized protein (267 aa).

The segment at 72-267 is disordered; sequence LTENNNNNNT…EEKKKKKKKK (196 aa). Positions 122-145 are enriched in low complexity; the sequence is DSVSSSTTTTIITNNKKINNNNNN. Residues 159–175 show a composition bias toward basic and acidic residues; sequence ENEKSVQKSKKEKESPK. A compositionally biased stretch (low complexity) spans 194 to 218; it reads SESSSSSSSSSSSESSSSESESSSS.

This is an uncharacterized protein from Dictyostelium discoideum (Social amoeba).